The following is a 534-amino-acid chain: MSSNKNQSDLNIPTNSASLKQKQRQQLGIKSEIGASTSDVYDPQVASYLSAGDSPSQFANTALHHSNSVSYSASAAAAAAELQHRAELQRRQQQLQQQELQHQQEQLQQYRQAQAQAQAQAQAQAQAQREHQQLQHAYQQQQQLHQLGQLSQQLAQPHLSQHEHVRDALTTDEFDTNEDLRSRYIENEIVKTFNSKAELVHFVKNELGPEERCKIVINSSKPKAVYFQCERSGSFRTTVKDATKRQRIAYTKRNKCAYRLVANLYPNEKDQKRKNKPDEPGHNEENSRISEMWVLRMINPQHNHAPDPINKKKRQKTSRTLVEKPINKPHHHHLLQQEQQQQQQQQQQQQQQQQQQQQQQHNANSQAQQQAAQLQQQMQQQLQASGLPTTPNYSELLGQLGQLSQQQSQQQQLHHIPQQRQRTQSQQSQQQPQQTPHGLDQPDAAVIAAIEASAAAAVASQGSPNVTAAAVAALQHTQGNEHDAQQQQDRGGNNGGAIDSNVDPSLDPNVDPNVQAHDHSHGLRNSYGKRSGFL.

The segment at 1–36 is disordered; that stretch reads MSSNKNQSDLNIPTNSASLKQKQRQQLGIKSEIGAS. A coiled-coil region spans residues 77-147; sequence AAAAELQHRA…YQQQQQLHQL (71 aa). Disordered regions lie at residues 262 to 285, 353 to 372, 402 to 439, and 477 to 534; these read ANLYPNEKDQKRKNKPDEPGHNEE, QQQQQQQQHNANSQAQQQAA, QLSQQQSQQQQLHHIPQQRQRTQSQQSQQQPQQTPHGL, and TQGN…SGFL. Positions 267–285 are enriched in basic and acidic residues; that stretch reads NEKDQKRKNKPDEPGHNEE. A coiled-coil region spans residues 332–386; it reads HHLLQQEQQQQQQQQQQQQQQQQQQQQQQHNANSQAQQQAAQLQQQMQQQLQASG. The span at 402–435 shows a compositional bias: low complexity; it reads QLSQQQSQQQQLHHIPQQRQRTQSQQSQQQPQQT.

The protein belongs to the RBF1 family.

Its subcellular location is the nucleus. It localises to the chromosome. The protein resides in the telomere. Transcriptional activator that binds to the RPG box and to telomeres. Involved in the regulation of the transition between yeast and filamentous forms and plays a role in virulence. Induces expression of HWP1, a major hyphal cell protein and virulence factor. This is Transcription factor RBF1 (RBF1) from Candida albicans (strain SC5314 / ATCC MYA-2876) (Yeast).